Consider the following 169-residue polypeptide: Ion-translocating oxidoreductase complex subunit B (169 aa).

The hydrophobic stretch occupies residues 1–23; it reads MIISIIIFSILSFILGVIVSLVS. Residues 30–89 enclose the 4Fe-4S domain; it reads SNLSLINDIDELLPQMQCAQCGYPGCYAYSQAIVDGNENIYKCIPGGKEVVLKLENLLNK. [4Fe-4S] cluster contacts are provided by Cys47, Cys50, Cys55, Cys72, Cys116, Cys119, Cys122, Cys126, Cys146, Cys149, Cys152, and Cys156. 2 consecutive 4Fe-4S ferredoxin-type domains span residues 107-136 and 137-166; these read SIVE…GTYN and FRHT…KKIM.

It belongs to the 4Fe4S bacterial-type ferredoxin family. RnfB subfamily. As to quaternary structure, the complex is composed of six subunits: RnfA, RnfB, RnfC, RnfD, RnfE and RnfG. [4Fe-4S] cluster is required as a cofactor.

It is found in the cell inner membrane. Part of a membrane-bound complex that couples electron transfer with translocation of ions across the membrane. In Buchnera aphidicola subsp. Baizongia pistaciae (strain Bp), this protein is Ion-translocating oxidoreductase complex subunit B.